A 345-amino-acid polypeptide reads, in one-letter code: Eukaryotic translation initiation factor 3 subunit F (345 aa).

The region spanning 30–166 (VVIQPQAIFS…TRAYISAPVG (137 aa)) is the MPN domain. The tract at residues 308–345 (GGESGGAESGAQRGQRGGKGGRGGQQRNQERGAEEARA) is disordered. The span at 322 to 331 (QRGGKGGRGG) shows a compositional bias: gly residues. The span at 335-345 (NQERGAEEARA) shows a compositional bias: basic and acidic residues.

It belongs to the eIF-3 subunit F family. Component of the eukaryotic translation initiation factor 3 (eIF-3) complex.

It is found in the cytoplasm. In terms of biological role, component of the eukaryotic translation initiation factor 3 (eIF-3) complex, which is involved in protein synthesis of a specialized repertoire of mRNAs and, together with other initiation factors, stimulates binding of mRNA and methionyl-tRNAi to the 40S ribosome. The eIF-3 complex specifically targets and initiates translation of a subset of mRNAs involved in cell proliferation. This Aspergillus clavatus (strain ATCC 1007 / CBS 513.65 / DSM 816 / NCTC 3887 / NRRL 1 / QM 1276 / 107) protein is Eukaryotic translation initiation factor 3 subunit F.